We begin with the raw amino-acid sequence, 120 residues long: Ribosome-binding factor A (120 aa).

The protein belongs to the RbfA family. In terms of assembly, monomer. Binds 30S ribosomal subunits, but not 50S ribosomal subunits or 70S ribosomes.

Its subcellular location is the cytoplasm. In terms of biological role, one of several proteins that assist in the late maturation steps of the functional core of the 30S ribosomal subunit. Associates with free 30S ribosomal subunits (but not with 30S subunits that are part of 70S ribosomes or polysomes). Required for efficient processing of 16S rRNA. May interact with the 5'-terminal helix region of 16S rRNA. This is Ribosome-binding factor A from Clostridium botulinum (strain Loch Maree / Type A3).